We begin with the raw amino-acid sequence, 310 residues long: DPDIVLPGNLGLLSEAYDRCGEVCAEYAKTFYLGTMLMTPDRRRAIWAIYVWCRRTDELVDGPNASHITPQALDRWEARLEDIFNGRPFDMLDAALSDTVSRFPVDIQPFRDMVEGMRMDLWKSRYNNFDELYLYCYYVAGTVGLMSVPIMGIAPESKATTESVYNAALALGIANQLTNILRDVGEDARRGRVYLPQDELAQAGLSDEDIFAGKVTDKWRIFMKKQIQRARKFFDEAEKGVTELSSASRWPVLASLLLYRKILDEIEANDYNNFTRRAYVSKPKKLLTLPIAYARSLVPPKSTSCPLAKT.

A chloroplast-targeting transit peptide spans 1–25 (DPDIVLPGNLGLLSEAYDRCGEVCA).

Belongs to the phytoene/squalene synthase family. As to quaternary structure, monomer.

The protein localises to the plastid. It is found in the chloroplast. The catalysed reaction is 2 (2E,6E,10E)-geranylgeranyl diphosphate = 15-cis-phytoene + 2 diphosphate. The protein operates within carotenoid biosynthesis; phytoene biosynthesis; all-trans-phytoene from geranylgeranyl diphosphate: step 1/1. Its function is as follows. Catalyzes the reaction from prephytoene diphosphate to phytoene. This Solanum lycopersicum (Tomato) protein is Phytoene synthase 2, chloroplastic (PSY2).